The primary structure comprises 1079 residues: Transport and Golgi organization protein 6 homolog (1079 aa).

A helical transmembrane segment spans residues 473-493 (VPVLLDSLLPLLRVFFSLYCF). S561 bears the Phosphoserine mark. The segment at 767–818 (AQSTLNQKDPGQKIEEQRQTSPDISTEGAQKPPRTGQGSSGPCTATSQPPGS) is disordered. Polar residues-rich tracts occupy residues 785–794 (QTSPDISTEG) and 802–818 (GQGS…PPGS). HEAT repeat units follow at residues 864–902 (LLQI…LVDL) and 937–973 (SKYR…CQCL).

This sequence belongs to the Tango6 family.

It is found in the membrane. This chain is Transport and Golgi organization protein 6 homolog (Tango6), found in Mus musculus (Mouse).